The following is a 119-amino-acid chain: Phenol 2-monooxygenase, oxygenase component DmpO (119 aa).

The multicomponent enzyme phenol hydroxylase is formed by DmpL (P1 component), DmpM (P2 component), DmpN (P3 component), DmpO (P4 component) and DmpP (P5 component). The oxygenase component is a dimer composed of three subunits, DmpL, DmpN and DmpO (DmpLNO).

The catalysed reaction is phenol + NADH + O2 + H(+) = catechol + NAD(+) + H2O. Its pathway is aromatic compound metabolism; phenol degradation. Its activity is regulated as follows. Requires DmpM for efficient turnover. The activity of DmpLNO oxygenase is inhibited by dithiothreitol (DTT) by a mechanism apparently involving H(2)O(2) generation. Part of a multicomponent enzyme which catalyzes the degradation of phenol and some of its methylated derivatives. DmpL, DmpN and DmpO form the oxygenase component of the complex. Required for growth on phenol and for in vitro phenol hydroxylase activity. This Pseudomonas sp. (strain CF600) protein is Phenol 2-monooxygenase, oxygenase component DmpO.